The chain runs to 248 residues: DNA/RNA-binding protein ALBA1 (248 aa).

The interval 217-248 (GRDGGYRGGNRGGSRSGFRGGRGGFRGGRALS) is disordered. Residues 222 to 248 (YRGGNRGGSRSGFRGGRGGFRGGRALS) show a composition bias toward gly residues.

This sequence belongs to the histone-like Alba family. As to quaternary structure, may form homodimers. Identified in a TARE6-associated complex consisting of over 30 proteins and including ALBA1, ALBA2 and ALBA4; the complex binds to the non-coding subtelomeric repeat region TARE6.

It localises to the nucleus. The protein resides in the chromosome. It is found in the telomere. The protein localises to the cytoplasm. In terms of biological role, possesses DNA- and RNA-binding activities. During the asexual blood stages binds to a sub-population of mature mRNAs and regulates the timing of their translation. Binds to DNA with relaxed sequence specificity. Associates with the subtelomeric TARE6 repeats. This chain is DNA/RNA-binding protein ALBA1, found in Plasmodium falciparum (isolate 3D7).